Reading from the N-terminus, the 457-residue chain is UDP-N-acetylmuramate--L-alanine ligase (457 aa).

109-115 (GTDGKTT) lines the ATP pocket.

Belongs to the MurCDEF family.

It is found in the cytoplasm. The catalysed reaction is UDP-N-acetyl-alpha-D-muramate + L-alanine + ATP = UDP-N-acetyl-alpha-D-muramoyl-L-alanine + ADP + phosphate + H(+). It functions in the pathway cell wall biogenesis; peptidoglycan biosynthesis. Its function is as follows. Cell wall formation. The protein is UDP-N-acetylmuramate--L-alanine ligase (murC) of Thermotoga maritima (strain ATCC 43589 / DSM 3109 / JCM 10099 / NBRC 100826 / MSB8).